We begin with the raw amino-acid sequence, 152 residues long: CASP-like protein 5B1 (152 aa).

Topologically, residues 1–11 (MKKMIGSPGTM) are cytoplasmic. A helical membrane pass occupies residues 12–32 (SGLILRLGQCATAAASIGVMV). The Extracellular portion of the chain corresponds to 33–42 (SSYDFSNYTA). Asn-39 is a glycosylation site (N-linked (GlcNAc...) asparagine). Residues 43–63 (FCFLVASMGLQLIWSFGLACL) traverse the membrane as a helical segment. The Cytoplasmic segment spans residues 64–77 (DVYAIRRKSDLRSP). A helical transmembrane segment spans residues 78-98 (ILLSLFTVGDWVTALLALAAA). Residues 99-131 (CSSAGVTVLFTKDTEFCRQQPALSCDRFQISVG) are Extracellular-facing. A helical transmembrane segment spans residues 132–152 (LSFFNWFLAAISSHTMFWILI).

The protein belongs to the Casparian strip membrane proteins (CASP) family. As to quaternary structure, homodimer and heterodimers. In terms of tissue distribution, expressed in leaves, exclusively in hair cells (e.g. differentiated trichomes and immature cells).

Its subcellular location is the cell membrane. The chain is CASP-like protein 5B1 from Arabidopsis thaliana (Mouse-ear cress).